We begin with the raw amino-acid sequence, 1103 residues long: Coatomer subunit beta (1103 aa).

HEAT repeat units follow at residues Glu51–Asp89, Glu94–Lys129, Val130–Leu166, Gln247–Ser284, Arg322–Val359, Val365–Glu404, and Ala405–His441.

Oligomeric complex that consists of at least the alpha, beta, beta', gamma, delta, epsilon and zeta subunits.

The protein localises to the cytoplasm. Its subcellular location is the golgi apparatus membrane. It localises to the cytoplasmic vesicle. It is found in the COPI-coated vesicle membrane. The coatomer is a cytosolic protein complex that binds to dilysine motifs and reversibly associates with Golgi non-clathrin-coated vesicles, which further mediate biosynthetic protein transport from the ER, via the Golgi up to the trans Golgi network. Coatomer complex is required for budding from Golgi membranes, and is essential for the retrograde Golgi-to-ER transport of dilysine-tagged proteins. The protein is Coatomer subunit beta of Toxoplasma gondii.